The primary structure comprises 125 residues: Putative zinc finger A20 and AN1 domain-containing stress-associated protein 8 (125 aa).

An A20-type zinc finger spans residues 2 to 36; that stretch reads TGEPSLCIRGCGFFSTSQTKNLCSKCYNDFLKDES. Positions 8, 12, 24, 27, 80, 82, 96, and 98 each coordinate Zn(2+). Residues 61-106 form an AN1-type; degenerate zinc finger; it reads LGSKGGCACKKKVGLLGFHCRCGHLFFASHRYPEEHSCPSDYKSAA.

Its function is as follows. May be involved in environmental stress response. The chain is Putative zinc finger A20 and AN1 domain-containing stress-associated protein 8 (SAP8) from Arabidopsis thaliana (Mouse-ear cress).